The chain runs to 20 residues: Protein PR-L3 (20 aa).

It belongs to the BetVI family.

The sequence is that of Protein PR-L3 from Lupinus luteus (European yellow lupine).